We begin with the raw amino-acid sequence, 232 residues long: Methylthioribulose-1-phosphate dehydratase (232 aa).

Cysteine 91 contributes to the substrate binding site. 3 residues coordinate Zn(2+): histidine 109, histidine 111, and histidine 191.

Belongs to the aldolase class II family. MtnB subfamily. Zn(2+) is required as a cofactor.

It is found in the cytoplasm. The enzyme catalyses 5-(methylsulfanyl)-D-ribulose 1-phosphate = 5-methylsulfanyl-2,3-dioxopentyl phosphate + H2O. The protein operates within amino-acid biosynthesis; L-methionine biosynthesis via salvage pathway; L-methionine from S-methyl-5-thio-alpha-D-ribose 1-phosphate: step 2/6. Its function is as follows. Catalyzes the dehydration of methylthioribulose-1-phosphate (MTRu-1-P) into 2,3-diketo-5-methylthiopentyl-1-phosphate (DK-MTP-1-P). The polypeptide is Methylthioribulose-1-phosphate dehydratase (Schizosaccharomyces japonicus (strain yFS275 / FY16936) (Fission yeast)).